Reading from the N-terminus, the 395-residue chain is MGIKHLFQVIQENAPDAIKAGDIKNHFGRKVAIDASMSIYSFLIAVRSEGQQLMSESGETTSHLMGMFYRTLRMVDNGIKPLYVFDGAPPKLKSGELAKRTARKAEATEAHEEAKETGTAEDVEKFSRRTVRVTREHNAECKKLLKLMGIPYIDAPTEAEAQCAVLARAGKVYAAASEDMDTLCFEAPILLRHLTFSEQRKEPIQEIHLNRTLEGLGMDRKQFIDLCILLGCDYLEPIPKVGPNTALKLIREHGSLEKVVEAIENDPKKKYVIPEDWPYQDARELFLHPDVREADHPECDFKWEAPDVEALVEFLVKDKGFNEDRVRNGAARLQKNLKTAQQSRLEGFFKPVARTDEEKASLKRKHDEKLQEQKKRKKEEAKAKKEAKAKPRGAA.

The segment at 1–104 (MGIKHLFQVI…GELAKRTARK (104 aa)) is N-domain. Asp-34 is a Mg(2+) binding site. Positions 47 and 70 each coordinate DNA. Mg(2+) is bound at residue Asp-86. The interval 102-121 (ARKAEATEAHEEAKETGTAE) is disordered. Residues 122–253 (DVEKFSRRTV…NTALKLIREH (132 aa)) are I-domain. Glu-158, Glu-160, Asp-179, and Asp-181 together coordinate Mg(2+). Position 158 (Glu-158) interacts with DNA. 2 residues coordinate DNA: Gly-231 and Asp-233. Asp-233 serves as a coordination point for Mg(2+). Positions 341 to 349 (QQSRLEGFF) are interaction with PCNA. The tract at residues 348–395 (FFKPVARTDEEKASLKRKHDEKLQEQKKRKKEEAKAKKEAKAKPRGAA) is disordered. Over residues 353–389 (ARTDEEKASLKRKHDEKLQEQKKRKKEEAKAKKEAKA) the composition is skewed to basic and acidic residues.

Belongs to the XPG/RAD2 endonuclease family. FEN1 subfamily. In terms of assembly, interacts with PCNA. Three molecules of fen1 bind to one PCNA trimer with each molecule binding to one PCNA monomer. PCNA stimulates the nuclease activity without altering cleavage specificity. Mg(2+) is required as a cofactor. Phosphorylated. Phosphorylation upon DNA damage induces relocalization to the nuclear plasma.

It localises to the nucleus. Its subcellular location is the nucleolus. It is found in the nucleoplasm. The protein localises to the mitochondrion. Structure-specific nuclease with 5'-flap endonuclease and 5'-3' exonuclease activities involved in DNA replication and repair. During DNA replication, cleaves the 5'-overhanging flap structure that is generated by displacement synthesis when DNA polymerase encounters the 5'-end of a downstream Okazaki fragment. It enters the flap from the 5'-end and then tracks to cleave the flap base, leaving a nick for ligation. Also involved in the long patch base excision repair (LP-BER) pathway, by cleaving within the apurinic/apyrimidinic (AP) site-terminated flap. Acts as a genome stabilization factor that prevents flaps from equilibrating into structures that lead to duplications and deletions. Also possesses 5'-3' exonuclease activity on nicked or gapped double-stranded DNA, and exhibits RNase H activity. Also involved in replication and repair of rDNA and in repairing mitochondrial DNA. The protein is Flap endonuclease 1 (fen1) of Neosartorya fischeri (strain ATCC 1020 / DSM 3700 / CBS 544.65 / FGSC A1164 / JCM 1740 / NRRL 181 / WB 181) (Aspergillus fischerianus).